A 277-amino-acid chain; its full sequence is Phosphate import ATP-binding protein PstB 2 (277 aa).

The ABC transporter domain occupies 31–272 (IEVPGLSLFY…PAKKQTEDYI (242 aa)). 63–70 (GPSGCGKS) provides a ligand contact to ATP.

This sequence belongs to the ABC transporter superfamily. Phosphate importer (TC 3.A.1.7) family. In terms of assembly, the complex is composed of two ATP-binding proteins (PstB), two transmembrane proteins (PstC and PstA) and a solute-binding protein (PstS).

The protein resides in the cell inner membrane. It carries out the reaction phosphate(out) + ATP + H2O = ADP + 2 phosphate(in) + H(+). Functionally, part of the ABC transporter complex PstSACB involved in phosphate import. Responsible for energy coupling to the transport system. The sequence is that of Phosphate import ATP-binding protein PstB 2 from Pseudomonas syringae pv. tomato (strain ATCC BAA-871 / DC3000).